The primary structure comprises 305 residues: Phosphoribosylaminoimidazole-succinocarboxamide synthase (305 aa).

Belongs to the SAICAR synthetase family.

The enzyme catalyses 5-amino-1-(5-phospho-D-ribosyl)imidazole-4-carboxylate + L-aspartate + ATP = (2S)-2-[5-amino-1-(5-phospho-beta-D-ribosyl)imidazole-4-carboxamido]succinate + ADP + phosphate + 2 H(+). Its pathway is purine metabolism; IMP biosynthesis via de novo pathway; 5-amino-1-(5-phospho-D-ribosyl)imidazole-4-carboxamide from 5-amino-1-(5-phospho-D-ribosyl)imidazole-4-carboxylate: step 1/2. The polypeptide is Phosphoribosylaminoimidazole-succinocarboxamide synthase (Tropheryma whipplei (strain TW08/27) (Whipple's bacillus)).